Here is a 69-residue protein sequence, read N- to C-terminus: Sperm protamine P1 (69 aa).

The interval 1–69 (MARYRHSRSR…YSRRRRRRYY (69 aa)) is disordered.

Belongs to the protamine P1 family. In terms of tissue distribution, testis.

It localises to the nucleus. The protein resides in the chromosome. Functionally, protamines substitute for histones in the chromatin of sperm during the haploid phase of spermatogenesis. They compact sperm DNA into a highly condensed, stable and inactive complex. This is Sperm protamine P1 (PRM1) from Pseudochirops cupreus (Coppery ringtail).